Reading from the N-terminus, the 637-residue chain is Anthranilate synthase, phenazine specific (637 aa).

The segment at 1–434 is anthranilate synthase component I; it reads MSQAAARLME…QRQQTQSDFS (434 aa). The region spanning 437–628 is the Glutamine amidotransferase type-1 domain; the sequence is QVLIVDAEDT…LRHALIHTPV (192 aa). Catalysis depends on for GATase activity residues Cys517, His602, and Glu604.

It catalyses the reaction chorismate + L-glutamine = anthranilate + pyruvate + L-glutamate + H(+). Its pathway is antibiotic biosynthesis; phenazine biosynthesis. Involved in the biosynthesis of the antibiotic, phenazine, a nitrogen-containing heterocyclic molecule having important roles in virulence, competition and biological control. The protein is Anthranilate synthase, phenazine specific (phzE) of Pseudomonas fluorescens.